Reading from the N-terminus, the 385-residue chain is Serine/threonine-protein kinase H2 (385 aa).

In terms of domain architecture, Protein kinase spans 63–320 (YDIKALIGTG…AGQALDHPWV (258 aa)). ATP contacts are provided by residues 69-77 (IGTGSFSRV) and K92. The segment at 342–367 (QRASPHSQSPGSAQSSKSHYSHKSRH) is disordered. The span at 344–359 (ASPHSQSPGSAQSSKS) shows a compositional bias: low complexity.

This sequence belongs to the protein kinase superfamily. CAMK Ser/Thr protein kinase family.

It catalyses the reaction L-seryl-[protein] + ATP = O-phospho-L-seryl-[protein] + ADP + H(+). The enzyme catalyses L-threonyl-[protein] + ATP = O-phospho-L-threonyl-[protein] + ADP + H(+). This Homo sapiens (Human) protein is Serine/threonine-protein kinase H2 (PSKH2).